The sequence spans 172 residues: Disulfide bond formation protein B (172 aa).

Over 1–11 the chain is Cytoplasmic; it reads MNPFRWGFRAQ. The helical transmembrane segment at 12–28 threads the bilayer; it reads FLLGFLACAGLLAYAIY. Topologically, residues 29–46 are periplasmic; that stretch reads VQLHLGLEPCPLCIFQRI. Cys38 and Cys41 are oxidised to a cystine. Residues 47–63 form a helical membrane-spanning segment; sequence AFATLALLFLLGALHGP. The Cytoplasmic portion of the chain corresponds to 64–70; that stretch reads RGAGGRK. The chain crosses the membrane as a helical span at residues 71–88; it reads AYGVLAFIAAGVGMGIAA. Topologically, residues 89-145 are periplasmic; that stretch reads RHVWVQIRPKDMMSSCGPPLSFLSETMGPFEVFRTVLTGTGDCGNIDWRFLGLSMPM. A disulfide bridge connects residues Cys104 and Cys131. Residues 146–164 traverse the membrane as a helical segment; that stretch reads WSMVWFVGLALWALYAGFK. At 165–172 the chain is on the cytoplasmic side; sequence HRGPRKLF.

It belongs to the DsbB family.

The protein resides in the cell inner membrane. Functionally, required for disulfide bond formation in some periplasmic proteins. Acts by oxidizing the DsbA protein. The polypeptide is Disulfide bond formation protein B (Xanthomonas campestris pv. campestris (strain 8004)).